We begin with the raw amino-acid sequence, 366 residues long: Isopropyl malate dehydrogenase htyC (366 aa).

An NADP(+)-binding site is contributed by 71–73; sequence VGG. Substrate contacts are provided by R91 and R130. Residues D221, D246, and D250 each coordinate Mg(2+). 277-282 is a binding site for NADP(+); that stretch reads GCVHGI.

This sequence belongs to the isocitrate and isopropylmalate dehydrogenases family. As to quaternary structure, homodimer. Mg(2+) is required as a cofactor. The cofactor is Mn(2+).

It catalyses the reaction (2R,3S)-3-isopropylmalate + NAD(+) = 4-methyl-2-oxopentanoate + CO2 + NADH. It functions in the pathway antifungal biosynthesis. Its function is as follows. Isopropyl malate dehydrogenase; part of the gene cluster that mediates the de novo generation of L-homotyrosine from acetyl-CoA and 4-hydroxyphenyl-pyruvate. L-homotyrosine is a building block of echinocandin B, a fungal lipidated cyclic hexapeptide that acts as an antifungal agent. L-homotyrosine 4-hydroxyphenyl-pyruvate first undergoes an aldol-type condensation by htyA with the C-2 of acetyl-CoA followed by the release of CoA to form 2-(4-hydroxybenzyl)-malate. This is followed by isomerization of 2-(4-hydroxy-benzyl)-malate to 3-(4-hydroxybenzyl)-malate by htyD. Thereafter, 3-(4-hydroxybenzyl)-malate undergoes decarboxylation and oxidation to form 2-oxo-4-(4-hydroxybenzyl)butanoic acid, coupled to reduction of NAD(+) to NADH by htyC. The product then undergoes transamination catalyzed by htyB to form L-homotyrosine. The polypeptide is Isopropyl malate dehydrogenase htyC (Aspergillus rugulosus (Emericella rugulosa)).